The primary structure comprises 313 residues: uncharacterized protein (313 aa).

The next 9 membrane-spanning stretches (helical) occupy residues 31-53 (AWGI…GWLF), 62-84 (LFLF…WNPY), 104-126 (VFFW…IYTS), 147-161 (FALL…NQSV), 166-185 (SMFW…SFLL), 198-220 (RVLK…ALRF), 225-244 (SFSG…YLII), 264-282 (FFAA…TSSF), and 286-308 (PAAM…SILI).

It localises to the cell membrane. This is an uncharacterized protein from Archaeoglobus fulgidus (strain ATCC 49558 / DSM 4304 / JCM 9628 / NBRC 100126 / VC-16).